The chain runs to 123 residues: Large ribosomal subunit protein bL12 (123 aa).

Belongs to the bacterial ribosomal protein bL12 family. As to quaternary structure, homodimer. Part of the ribosomal stalk of the 50S ribosomal subunit. Forms a multimeric L10(L12)X complex, where L10 forms an elongated spine to which 2 to 4 L12 dimers bind in a sequential fashion. Binds GTP-bound translation factors.

Forms part of the ribosomal stalk which helps the ribosome interact with GTP-bound translation factors. Is thus essential for accurate translation. The chain is Large ribosomal subunit protein bL12 from Neisseria gonorrhoeae (strain NCCP11945).